A 215-amino-acid chain; its full sequence is Ribonuclease T (215 aa).

One can recognise an Exonuclease domain in the interval 20–194 (VVIDVETAGF…YDTERTAVLF (175 aa)). Residues Asp-23, Glu-25, His-181, and Asp-186 each contribute to the Mg(2+) site. Residue His-181 is the Proton donor/acceptor of the active site.

Belongs to the RNase T family. In terms of assembly, homodimer. Mg(2+) serves as cofactor.

In terms of biological role, trims short 3' overhangs of a variety of RNA species, leaving a one or two nucleotide 3' overhang. Responsible for the end-turnover of tRNA: specifically removes the terminal AMP residue from uncharged tRNA (tRNA-C-C-A). Also appears to be involved in tRNA biosynthesis. The sequence is that of Ribonuclease T from Salmonella paratyphi A (strain ATCC 9150 / SARB42).